The sequence spans 907 residues: Translation initiation factor IF-2 (907 aa).

The segment at 1–305 is disordered; it reads MSEGNDQDQG…SLASVRRQRE (305 aa). The segment covering 62–80 has biased composition (gly residues); that stretch reads SGSGSSGGGRAGGRGGSGG. Basic and acidic residues-rich tracts occupy residues 93-114 and 122-158; these read RVLEEQRAEAVRREQERREQEK and EEARRRDEEARRAAEDEVREKEEAAARAREEEAERRA. Over residues 211–230 the composition is skewed to low complexity; the sequence is PARPVTPSRPATPAATPQAP. Composition is skewed to basic and acidic residues over residues 240–249 and 271–280; these read RVGEAEDDRR and KGGDSRRSGR. A tr-type G domain is found at 406-576; it reads PRPPVVTVMG…LLQAEMLDLR (171 aa). The tract at residues 415-422 is G1; it reads GHVDHGKT. 415–422 is a binding site for GTP; sequence GHVDHGKT. Positions 440–444 are G2; that stretch reads GITQH. The G3 stretch occupies residues 462 to 465; sequence DTPG. Residues 462 to 466 and 516 to 519 each bind GTP; these read DTPGH and NKCD. Residues 516–519 are G4; it reads NKCD. The interval 552-554 is G5; the sequence is SAL.

Belongs to the TRAFAC class translation factor GTPase superfamily. Classic translation factor GTPase family. IF-2 subfamily.

The protein resides in the cytoplasm. Its function is as follows. One of the essential components for the initiation of protein synthesis. Protects formylmethionyl-tRNA from spontaneous hydrolysis and promotes its binding to the 30S ribosomal subunits. Also involved in the hydrolysis of GTP during the formation of the 70S ribosomal complex. The chain is Translation initiation factor IF-2 from Gluconacetobacter diazotrophicus (strain ATCC 49037 / DSM 5601 / CCUG 37298 / CIP 103539 / LMG 7603 / PAl5).